Consider the following 449-residue polypeptide: Glutamyl-tRNA reductase (449 aa).

Substrate-binding positions include 58 to 61, S121, 126 to 128, and Q132; these read TCNR and ETQ. C59 serves as the catalytic Nucleophile. An NADP(+)-binding site is contributed by 203 to 208; sequence GLGEMA.

It belongs to the glutamyl-tRNA reductase family. As to quaternary structure, homodimer.

It catalyses the reaction (S)-4-amino-5-oxopentanoate + tRNA(Glu) + NADP(+) = L-glutamyl-tRNA(Glu) + NADPH + H(+). The protein operates within porphyrin-containing compound metabolism; protoporphyrin-IX biosynthesis; 5-aminolevulinate from L-glutamyl-tRNA(Glu): step 1/2. Catalyzes the NADPH-dependent reduction of glutamyl-tRNA(Glu) to glutamate 1-semialdehyde (GSA). In Helicobacter pylori (strain J99 / ATCC 700824) (Campylobacter pylori J99), this protein is Glutamyl-tRNA reductase.